Here is a 182-residue protein sequence, read N- to C-terminus: Large ribosomal subunit protein uL6 (182 aa).

Belongs to the universal ribosomal protein uL6 family. As to quaternary structure, part of the 50S ribosomal subunit.

In terms of biological role, this protein binds to the 23S rRNA, and is important in its secondary structure. It is located near the subunit interface in the base of the L7/L12 stalk, and near the tRNA binding site of the peptidyltransferase center. The chain is Large ribosomal subunit protein uL6 from Dehalococcoides mccartyi (strain ATCC BAA-2266 / KCTC 15142 / 195) (Dehalococcoides ethenogenes (strain 195)).